The chain runs to 608 residues: MCGIVGYIGDKQATPILLEGLTRLEYRGYDSAGIAILHNGNINIKKAKGRLNVLRELVEKDYMEGTIGIGHTRWATHGEPSDTNSHPHLSQSGLIAVVHNGIIENYLPLKKWLIEEGYNFISETDTEVVANLLEYYYNGDIVEALRKVLDRIEGSYALGVLCKDNPDMIVAARKEAPLIVGIGNGENFIASDIPAILKYTRNVYFLDDHEIAIIKKDSVEFIDVFGRKIGKSLFEVKWDVEAAEKGGYEHFMIKEIHEQPAAIKDTLRGRIINDSQIVLDNINITKEDLEKIEKIFIVACGTAYHAGVVGKYVIESFARIPVEVDVASEFRYRNPIVNERILTIVISQSGETADTIAALKEAKRKGSRVIAITNVVGSSVSREADEVLYTWAGPEIAVASTKAYTTQLIALYLIALDFALKKGTMSSTKVVEIISELKKLPDKVQYLLDNKEVIQKFASEHYNVKDVFYIGRGLDYAVAMEGSLKLKEISYIHSEAYPAGELKHGTLALVEEGTLIIALATQDDLFEKMLSNIKEVKARGGYVVAFAKQGNLQLEGVVDKVIYIPDTLKELTPVLTVVPLQLLAYYMAVEKGCDVDKPRNLAKSVTVE.

The active-site Nucleophile; for GATase activity is the C2. A Glutamine amidotransferase type-2 domain is found at 2-217 (CGIVGYIGDK…DHEIAIIKKD (216 aa)). 2 consecutive SIS domains span residues 285-424 (TKED…KKGT) and 453-598 (VIQK…VDKP). The active-site For Fru-6P isomerization activity is the K603.

As to quaternary structure, homodimer.

The protein localises to the cytoplasm. The enzyme catalyses D-fructose 6-phosphate + L-glutamine = D-glucosamine 6-phosphate + L-glutamate. Catalyzes the first step in hexosamine metabolism, converting fructose-6P into glucosamine-6P using glutamine as a nitrogen source. This Caldanaerobacter subterraneus subsp. tengcongensis (strain DSM 15242 / JCM 11007 / NBRC 100824 / MB4) (Thermoanaerobacter tengcongensis) protein is Glutamine--fructose-6-phosphate aminotransferase [isomerizing].